The sequence spans 233 residues: Large ribosomal subunit protein uL1 (233 aa).

It belongs to the universal ribosomal protein uL1 family. In terms of assembly, part of the 50S ribosomal subunit.

Binds directly to 23S rRNA. The L1 stalk is quite mobile in the ribosome, and is involved in E site tRNA release. In terms of biological role, protein L1 is also a translational repressor protein, it controls the translation of the L11 operon by binding to its mRNA. The protein is Large ribosomal subunit protein uL1 of Deinococcus deserti (strain DSM 17065 / CIP 109153 / LMG 22923 / VCD115).